A 153-amino-acid polypeptide reads, in one-letter code: Ubiquitin/ISG15-conjugating enzyme E2 L6 (153 aa).

Positions 2 to 149 (TASKRVAKEL…AEEFTLQYGV (148 aa)) constitute a UBC core domain. Residue Cys-86 is the Glycyl thioester intermediate of the active site.

It belongs to the ubiquitin-conjugating enzyme family. As to quaternary structure, interacts with RNF19A, RNF19B and RNF144B. Interacts with FLT3 (tyrosine phosphorylated). In terms of processing, ISGylated.

The enzyme catalyses S-ubiquitinyl-[E1 ubiquitin-activating enzyme]-L-cysteine + [E2 ubiquitin-conjugating enzyme]-L-cysteine = [E1 ubiquitin-activating enzyme]-L-cysteine + S-ubiquitinyl-[E2 ubiquitin-conjugating enzyme]-L-cysteine.. Its pathway is protein modification; protein ubiquitination. Its function is as follows. Catalyzes the covalent attachment of ubiquitin to other proteins. Functions in the E6/E6-AP-induced ubiquitination of p53/TP53. Promotes ubiquitination and subsequent proteasomal degradation of FLT3. The chain is Ubiquitin/ISG15-conjugating enzyme E2 L6 (Ube2l6) from Rattus norvegicus (Rat).